A 288-amino-acid chain; its full sequence is uncharacterized protein (288 aa).

2 disordered regions span residues 31-52 (KAVD…EAPS) and 179-288 (YPSK…VELK). Residues 206 to 217 (RPSSPTNFSKLI) show a composition bias toward polar residues. Residues 221–236 (YKDEWLQQQADSDKRA) are compositionally biased toward basic and acidic residues. 2 stretches are compositionally biased toward low complexity: residues 237–249 (PQTP…SPSP) and 267–276 (AAESSPLSSA).

This is an uncharacterized protein from Bos taurus (Bovine).